The chain runs to 367 residues: Homoserine O-acetyltransferase (367 aa).

The 299-residue stretch at 41-339 (NLIVLEHALT…PVGHDAFLTE (299 aa)) folds into the AB hydrolase-1 domain. Ser136 functions as the Nucleophile in the catalytic mechanism. Position 205 (Arg205) interacts with substrate. Active-site residues include Asp303 and His333. Residue Asp334 participates in substrate binding.

The protein belongs to the AB hydrolase superfamily. MetX family. In terms of assembly, homodimer.

The protein resides in the cytoplasm. The enzyme catalyses L-homoserine + acetyl-CoA = O-acetyl-L-homoserine + CoA. The protein operates within amino-acid biosynthesis; L-methionine biosynthesis via de novo pathway; O-acetyl-L-homoserine from L-homoserine: step 1/1. In terms of biological role, transfers an acetyl group from acetyl-CoA to L-homoserine, forming acetyl-L-homoserine. The polypeptide is Homoserine O-acetyltransferase (Corynebacterium diphtheriae (strain ATCC 700971 / NCTC 13129 / Biotype gravis)).